The following is a 512-amino-acid chain: NAD(P)H-quinone oxidoreductase chain 4, chloroplastic (512 aa).

The next 14 membrane-spanning stretches (helical) occupy residues 4–24, 34–54, 87–107, 111–131, 134–154, 167–187, 210–230, 241–261, 273–293, 312–332, 333–353, 373–395, 416–436, and 462–482; these read LPWLTIIVLFPILAGLLIPFI, WYALGVGILDFLLITYIFGYH, MPLVLLTGFVTTLAILGAWPV, AKLFYFLMLAMYSGQIGVFVS, LLLFFFMWELELIPVYLLLLV, FILYTAIGSIFILLAGLTMAF, ILLYIGFLIAYAVKLPAFPLH, HYSTCMLLAGILLKMGGYALI, LIFAPFLIIIGVINIIYAALT, MGFVLIGIGSLTNLGLSGAVL, QMISHGLIGASLFFLAGTTYD, TFAMFTTCSLASLALPGMSGFVA, IITFLEGIGIILTPIYLLSML, and IFVITCLVLPILGIGIYPKMA.

It belongs to the complex I subunit 4 family.

The protein resides in the plastid. It is found in the chloroplast thylakoid membrane. The enzyme catalyses a plastoquinone + NADH + (n+1) H(+)(in) = a plastoquinol + NAD(+) + n H(+)(out). It catalyses the reaction a plastoquinone + NADPH + (n+1) H(+)(in) = a plastoquinol + NADP(+) + n H(+)(out). This chain is NAD(P)H-quinone oxidoreductase chain 4, chloroplastic, found in Chlorokybus atmophyticus (Soil alga).